We begin with the raw amino-acid sequence, 161 residues long: Protein-export protein SecB (161 aa).

The disordered stretch occupies residues 141 to 161; it reads KKQQETAGEQPDQPADTITRH.

It belongs to the SecB family. As to quaternary structure, homotetramer, a dimer of dimers. One homotetramer interacts with 1 SecA dimer.

The protein resides in the cytoplasm. In terms of biological role, one of the proteins required for the normal export of preproteins out of the cell cytoplasm. It is a molecular chaperone that binds to a subset of precursor proteins, maintaining them in a translocation-competent state. It also specifically binds to its receptor SecA. This Nitrosomonas europaea (strain ATCC 19718 / CIP 103999 / KCTC 2705 / NBRC 14298) protein is Protein-export protein SecB.